We begin with the raw amino-acid sequence, 431 residues long: Isochorismate synthase MenF (431 aa).

Lysine 190 serves as the catalytic Proton acceptor. Glutamate 240 serves as the catalytic Proton donor. Mg(2+) is bound by residues glutamate 284 and glutamate 416.

This sequence belongs to the isochorismate synthase family. Homodimer. Mg(2+) is required as a cofactor.

The catalysed reaction is chorismate = isochorismate. It participates in quinol/quinone metabolism; 1,4-dihydroxy-2-naphthoate biosynthesis; 1,4-dihydroxy-2-naphthoate from chorismate: step 1/7. It functions in the pathway quinol/quinone metabolism; menaquinone biosynthesis. In terms of biological role, catalyzes the conversion of chorismate to isochorismate. Can also catalyze the reverse reaction, but with a lower efficiency. The polypeptide is Isochorismate synthase MenF (Escherichia coli (strain K12)).